A 54-amino-acid chain; its full sequence is Photosystem II reaction center protein K (54 aa).

Positions 1–17 are excised as a propeptide; it reads MLLEHVTITLLNNTSFA. The chain crosses the membrane as a helical span at residues 29–49; it reads LIDVLPIIPLLFLLLAFVWQA.

Belongs to the PsbK family. PSII is composed of 1 copy each of membrane proteins PsbA, PsbB, PsbC, PsbD, PsbE, PsbF, PsbH, PsbI, PsbJ, PsbK, PsbL, PsbM, PsbT, PsbY, PsbZ, Psb30/Ycf12, at least 3 peripheral proteins of the oxygen-evolving complex and a large number of cofactors. It forms dimeric complexes.

Its subcellular location is the plastid. The protein localises to the chloroplast thylakoid membrane. One of the components of the core complex of photosystem II (PSII). PSII is a light-driven water:plastoquinone oxidoreductase that uses light energy to abstract electrons from H(2)O, generating O(2) and a proton gradient subsequently used for ATP formation. It consists of a core antenna complex that captures photons, and an electron transfer chain that converts photonic excitation into a charge separation. The sequence is that of Photosystem II reaction center protein K from Euglena mutabilis.